We begin with the raw amino-acid sequence, 637 residues long: Nucleoside triphosphatase I (637 aa).

Positions 43–205 (FLGLNSMNSI…QMLVNLLRPG (163 aa)) constitute a Helicase ATP-binding domain. Residue 56-63 (QETGVGKT) participates in ATP binding. Residues 142-145 (DECH) carry the DEXH box motif. The region spanning 358 to 537 (ELYNYLYEHS…QLYKVFKHSS (180 aa)) is the Helicase C-terminal domain. Residues 459-526 (DIFILDMTWN…DIIQSKSKEF (68 aa)) are binding to the cap-specific mRNA (nucleoside-2'-O-)-methyltransferase.

This sequence belongs to the helicase family. NPH I subfamily. Monomer. Interacts (via C-terminus) with RAP94 (via N-terminus). Interacts with the cap-specific mRNA (nucleoside-2'-O-)-methyltransferase.

It is found in the virion. The enzyme catalyses a ribonucleoside 5'-triphosphate + H2O = a ribonucleoside 5'-diphosphate + phosphate + H(+). Its function is as follows. DNA-dependent ATPase required for providing the needed energy to achieve the termination of early transcripts. Acts in concert with the RAP94 subunit of the virion RNA polymerase and the capping enzyme/VTF to catalyze release of UUUUUNU-containing nascent RNA from the elongation complex. NPH-I must bind ssDNA in order to exhibit ATPase activity. The chain is Nucleoside triphosphatase I (NPH1) from Vertebrata (FPV).